We begin with the raw amino-acid sequence, 256 residues long: Phosphatidylglycerol--prolipoprotein diacylglyceryl transferase (256 aa).

The next 3 helical transmembrane spans lie at 19 to 39 (VHWY…LGYW), 56 to 76 (LIFY…MLFY), and 91 to 111 (IWEG…AAWL). A 1,2-diacyl-sn-glycero-3-phospho-(1'-sn-glycerol) is bound at residue arginine 139. The helical transmembrane segment at 231 to 251 (FGWLTMGQVLSIPMLLIGIWL) threads the bilayer.

It belongs to the Lgt family.

The protein resides in the cell inner membrane. It carries out the reaction L-cysteinyl-[prolipoprotein] + a 1,2-diacyl-sn-glycero-3-phospho-(1'-sn-glycerol) = an S-1,2-diacyl-sn-glyceryl-L-cysteinyl-[prolipoprotein] + sn-glycerol 1-phosphate + H(+). Its pathway is protein modification; lipoprotein biosynthesis (diacylglyceryl transfer). Functionally, catalyzes the transfer of the diacylglyceryl group from phosphatidylglycerol to the sulfhydryl group of the N-terminal cysteine of a prolipoprotein, the first step in the formation of mature lipoproteins. This is Phosphatidylglycerol--prolipoprotein diacylglyceryl transferase from Legionella pneumophila (strain Lens).